A 188-amino-acid polypeptide reads, in one-letter code: MATVGMNDVKNGMKILVNNEPAVITETEYVKPGKGQAFTRMKYRFIKSGRVVEMTMKATDDVEVADVVDTDMRYLYSDGEYWHFMDPDTFEQVQTDKAGMGGADKWLKGEEDCIVTLWNGTPIWVQPPNFVELKITETDPGVRGDTSGGGGKPATLETGAVVRVPLFVNQDEIIKVDTRSGEYSARVK.

Lys34 bears the N6-(3,6-diaminohexanoyl)-5-hydroxylysine mark.

This sequence belongs to the elongation factor P family. Post-translationally, may be beta-lysylated on the epsilon-amino group of Lys-34 by the combined action of EpmA and EpmB, and then hydroxylated on the C5 position of the same residue by EpmC (if this protein is present). Lysylation is critical for the stimulatory effect of EF-P on peptide-bond formation. The lysylation moiety may extend toward the peptidyltransferase center and stabilize the terminal 3-CCA end of the tRNA. Hydroxylation of the C5 position on Lys-34 may allow additional potential stabilizing hydrogen-bond interactions with the P-tRNA.

The protein resides in the cytoplasm. Its pathway is protein biosynthesis; polypeptide chain elongation. In terms of biological role, involved in peptide bond synthesis. Alleviates ribosome stalling that occurs when 3 or more consecutive Pro residues or the sequence PPG is present in a protein, possibly by augmenting the peptidyl transferase activity of the ribosome. Modification of Lys-34 is required for alleviation. The protein is Elongation factor P of Xanthomonas axonopodis pv. citri (strain 306).